Consider the following 124-residue polypeptide: Large ribosomal subunit protein bL20 (124 aa).

It belongs to the bacterial ribosomal protein bL20 family.

Its function is as follows. Binds directly to 23S ribosomal RNA and is necessary for the in vitro assembly process of the 50S ribosomal subunit. It is not involved in the protein synthesizing functions of that subunit. The polypeptide is Large ribosomal subunit protein bL20 (rplT) (Mycoplasma genitalium (strain ATCC 33530 / DSM 19775 / NCTC 10195 / G37) (Mycoplasmoides genitalium)).